The chain runs to 381 residues: Sulfate/thiosulfate import ATP-binding protein CysA (381 aa).

In terms of domain architecture, ABC transporter spans 3 to 233 (ILVYEVSKSL…PIDYFVGIFS (231 aa)). 35-42 (GPSGSGKS) provides a ligand contact to ATP.

This sequence belongs to the ABC transporter superfamily. Sulfate/tungstate importer (TC 3.A.1.6) family.

The protein resides in the plastid. The protein localises to the chloroplast. The enzyme catalyses sulfate(out) + ATP + H2O = sulfate(in) + ADP + phosphate + H(+). It catalyses the reaction thiosulfate(out) + ATP + H2O = thiosulfate(in) + ADP + phosphate + H(+). Its function is as follows. Part of the ABC transporter complex involved in sulfate/thiosulfate import. Responsible for energy coupling to the transport system. This is Sulfate/thiosulfate import ATP-binding protein CysA from Anthoceros angustus (Hornwort).